The primary structure comprises 60 residues: Large ribosomal subunit protein bL32 (60 aa).

The span at 1-20 shows a compositional bias: basic residues; that stretch reads MACPKKKTSKSKRSMRRAAW. Positions 1-22 are disordered; that stretch reads MACPKKKTSKSKRSMRRAAWKR.

Belongs to the bacterial ribosomal protein bL32 family.

This is Large ribosomal subunit protein bL32 from Thermosynechococcus vestitus (strain NIES-2133 / IAM M-273 / BP-1).